Consider the following 1266-residue polypeptide: Kinesin-like protein KIN-12G (1266 aa).

The disordered stretch occupies residues 1-22 (MPSDCGDDDHGGGSAPAGFELQ). One can recognise a Kinesin motor domain in the interval 32-369 (NVQVVIRVRP…LKFAQRAKYI (338 aa)). 113 to 120 (GQTGSGKT) provides a ligand contact to ATP. 4 coiled-coil regions span residues 613 to 668 (MEFI…SEAV), 817 to 854 (RSEL…FKRK), 1029 to 1060 (ARES…AERV), and 1084 to 1120 (SELL…MNRH).

The protein belongs to the TRAFAC class myosin-kinesin ATPase superfamily. Kinesin family. KIN-12 subfamily.

This chain is Kinesin-like protein KIN-12G, found in Oryza sativa subsp. japonica (Rice).